The chain runs to 408 residues: Interferon-activable protein 203 (408 aa).

A Pyrin domain is found at 1–87 (MAEYKNIVLL…AKKLKTEKAK (87 aa)). A disordered region spans residues 84-208 (EKAKVQEKKK…EGHHQGPKQV (125 aa)). The span at 92–102 (KKGKCKTAGKK) shows a compositional bias: basic residues. Polar residues predominate over residues 150-159 (AQLPETSGTN). Residues 190-388 (TVPKEPSREE…SVRHSYMQVI (199 aa)) enclose the HIN-200 domain.

It belongs to the HIN-200 family. Constitutively expressed in the thymus, bone marrow and spleen. Isoform 1 and isoform 3 are present in liver (at protein level).

The protein resides in the nucleus. The sequence is that of Interferon-activable protein 203 (Ifi203) from Mus musculus (Mouse).